The chain runs to 136 residues: ATP synthase F(0) complex subunit C1, mitochondrial (136 aa).

Residues 1–61 (MQTTGALLIS…REFQTSVVSR (61 aa)) constitute a mitochondrion transit peptide. Residues 77 to 97 (VGVAGSGAGIGTVFGSLIIGY) traverse the membrane as a helical segment. Lysine 104 is subject to N6,N6,N6-trimethyllysine. Residues 112 to 132 (ILGFALFEAMGLFCLMVAFLI) traverse the membrane as a helical segment.

It belongs to the ATPase C chain family. Homooctamer; the c-ring consists of eight c subunits forming a circle, and each subunit adopts a hairpin shape. Component of the ATP synthase complex composed at least of ATP5F1A/subunit alpha, ATP5F1B/subunit beta, ATP5MC1/subunit c (homooctomer), MT-ATP6/subunit a, MT-ATP8/subunit 8, ATP5ME/subunit e, ATP5MF/subunit f, ATP5MG/subunit g, ATP5MK/subunit k, ATP5MJ/subunit j, ATP5F1C/subunit gamma, ATP5F1D/subunit delta, ATP5F1E/subunit epsilon, ATP5PF/subunit F6, ATP5PB/subunit b, ATP5PD/subunit d, ATP5PO/subunit OSCP. ATP synthase complex consists of a soluble F(1) head domain (subunits alpha(3) and beta(3)) - the catalytic core - and a membrane F(0) domain - the membrane proton channel (subunits c, a, 8, e, f, g, k and j). These two domains are linked by a central stalk (subunits gamma, delta, and epsilon) rotating inside the F1 region and a stationary peripheral stalk (subunits F6, b, d, and OSCP). Interacts with TMEM70 (homooligomer form); this interaction facilitates the oligomer formation of subunit c/ATP5MC1 (c-ring) and the c-ring membrane insertion and also protects ATP5MC1 against intramitochondrial proteolysis. Post-translationally, trimethylated by ATPSCKMT at Lys-104. Methylation is required for proper incorporation of the C subunit into the ATP synthase complex and mitochondrial respiration.

It is found in the mitochondrion membrane. The catalysed reaction is H(+)(in) = H(+)(out). Functionally, subunit c, of the mitochondrial membrane ATP synthase complex (F(1)F(0) ATP synthase or Complex V) that produces ATP from ADP in the presence of a proton gradient across the membrane which is generated by electron transport complexes of the respiratory chain. ATP synthase complex consist of a soluble F(1) head domain - the catalytic core - and a membrane F(1) domain - the membrane proton channel. These two domains are linked by a central stalk rotating inside the F(1) region and a stationary peripheral stalk. During catalysis, ATP synthesis in the catalytic domain of F(1) is coupled via a rotary mechanism of the central stalk subunits to proton translocation. With the subunit a (MT-ATP6), forms the proton-conducting channel in the F(0) domain, that contains two crucial half-channels (inlet and outlet) that facilitate proton movement from the mitochondrial intermembrane space (IMS) into the matrix. Protons are taken up via the inlet half-channel and released through the outlet half-channel, following a Grotthuss mechanism. This Sus scrofa (Pig) protein is ATP synthase F(0) complex subunit C1, mitochondrial.